The following is a 68-amino-acid chain: MAQANVVLPAPNGKLTEELMGLAIHKLSQLGTIEGDEIGVYTADVPEGRPPGFYFEFRANIIPYLGRR.

In Mycobacterium phage D29 (Mycobacteriophage D29), this protein is Gene 42 protein (42).